Reading from the N-terminus, the 942-residue chain is MTQLASSYDPKSFETDLYEAWEKAGHFKPSGTGEPYTILLPPPNVTGTLHMGHAFQQTLMDALVRYHRMRGYDTLWQVGTDHAGIATEMVVSRNLALEGKGETRDSLGREGFIGKVWEWKQQSGDIIERQMRRLGTSADWSRSTFTMDPQPSAAVNEAFVRWYEQGLIYRGQRLVNWDPVLKTAISDLEVESAEEDGFLWSIAYTLDDGLSYEHVERDADGVETLRETRDYLVVATTRPETLLGDTAVMVHPEDARYAHLIGKSVVLPLTGRRVPVIADDYVDRAFGTGVVKVTPAHDFNDYEVGVRHSLPMINLFTPVAALNENAPERFQGLDRYAARKAVLAELEDLGILVETKAHKLQVPRGDRTGQVIEPYLTDQWFVKMDDLAKRGLELVEDGSISFVPPNWINTYRHWMNNIQDWCISRQLWWGHRIPAWFDEATGSCYVGRSEEEVRAKHSLGSDVVLNQESDVLETWFSSQLWPFSTLGWPNEQAMAERGFDRYLPSSVLITGFDIIFFWVARMIMATDNLVGKIPFKDVYFTGLIRDGQGQKMSKSKGNVLDPLDIIDGISIDDLVAKRTGGLMQPKMVEKIEKATRKEFPDGIAAHGADALRFTIAALATHGRDIKFDMNRAEGYKNFCNKLWNASRFTLMNTEGAAFTGMPTPRTDAERWILSRLAAVSSEAQGHYANYRFDLLAQCLYEFAWNEFCDWFLELSKPALNGADAADAESTRHTLLYVLEALLRLLHPLTPFITEQLWQQLAPRLGLAETTLSLRPYPTAAEFEGDFAQAEADVEWLKAVISAVRRVRSELNVAPSKQVPLRLQAGLEQDRVRIERFSASLSFLLKLDSIQWLAEGESAPPAAAAIVGELKLLVPLEGLVDLDAERVRLDKEIARVEVEKEKSETKLAKFTDKVPPAVVEQERVRLVDWNTQLAGLREQRAKL.

The 'HIGH' region motif lies at 43 to 53; that stretch reads PNVTGTLHMGH. A 'KMSKS' region motif is present at residues 551–555; the sequence is KMSKS. K554 contributes to the ATP binding site. Residues 876-942 adopt a coiled-coil conformation; it reads EGLVDLDAER…AGLREQRAKL (67 aa).

Belongs to the class-I aminoacyl-tRNA synthetase family. ValS type 1 subfamily. As to quaternary structure, monomer.

It is found in the cytoplasm. It carries out the reaction tRNA(Val) + L-valine + ATP = L-valyl-tRNA(Val) + AMP + diphosphate. Catalyzes the attachment of valine to tRNA(Val). As ValRS can inadvertently accommodate and process structurally similar amino acids such as threonine, to avoid such errors, it has a 'posttransfer' editing activity that hydrolyzes mischarged Thr-tRNA(Val) in a tRNA-dependent manner. This chain is Valine--tRNA ligase, found in Stenotrophomonas maltophilia (strain R551-3).